Here is a 385-residue protein sequence, read N- to C-terminus: Isocitrate dehydrogenase [NAD] subunit beta, mitochondrial (385 aa).

The transit peptide at 1–33 directs the protein to the mitochondrion; it reads MAALSRVRWLTRALVAAPNPGAWRSLCTSTVAQ. The residue at position 199 (lysine 199) is an N6-acetyllysine.

Belongs to the isocitrate and isopropylmalate dehydrogenases family. Heterooligomer of subunits alpha (IDH3A), beta (IDH3B), and gamma (IDH3G) in the apparent ratio of 2:1:1. The heterodimer containing one IDH3A and one IDH3B subunit and the heterodimer containing one IDH3A and one IDH3G subunit assemble into a heterotetramer (which contains two subunits of IDH3A, one of IDH3B and one of IDH3G) and further into the heterooctamer. As to expression, isoform A is predominant in heart muscle; also found in brain, kidney and liver. Isoform B is present in kidney and liver.

The protein resides in the mitochondrion. Its activity is regulated as follows. The heterotetramer and the heterodimer composed of IDH3A and IDH3G subunits can be allosterically activated by citrate (CIT) or/and ADP, and the two activators can act independently or synergistically. The heterodimer composed of IDH3A and IDH3B subunits cannot be allosterically regulated and the allosteric regulation of the heterotetramer is through the IDH3G subunit and not the IDH3B subunit. The IDH3G subunit contains the allosteric site which consists of a CIT-binding site and an ADP-binding site, and the binding of CIT and ADP causes conformational changes at the allosteric site which are transmitted to the active site in the catalytic subunit (IDH3A) through a cascade of conformational changes at the heterodimer interface, leading to stabilization of the isocitrate-binding at the active site and thus activation of the enzyme. ATP can activate the heterotetramer and the heterodimer composed of IDH3A and IDH3G subunits at low concentrations but inhibits their activities at high concentrations, whereas ATP exhibits only inhibitory effect on the heterodimer composed of IDH3A and IDH3B subunits. Plays a structural role to facilitate the assembly and ensure the full activity of the enzyme catalyzing the decarboxylation of isocitrate (ICT) into alpha-ketoglutarate. The heterodimer composed of the alpha (IDH3A) and beta (IDH3B) subunits and the heterodimer composed of the alpha (IDH3A) and gamma (IDH3G) subunits, have considerable basal activity but the full activity of the heterotetramer (containing two subunits of IDH3A, one of IDH3B and one of IDH3G) requires the assembly and cooperative function of both heterodimers. The polypeptide is Isocitrate dehydrogenase [NAD] subunit beta, mitochondrial (IDH3B) (Bos taurus (Bovine)).